The sequence spans 507 residues: Fluoroacetaldehyde dehydrogenase (507 aa).

219-225 is a binding site for NAD(+); that stretch reads GFGIEAG. Catalysis depends on residues glutamate 263 and cysteine 302.

This sequence belongs to the aldehyde dehydrogenase family. In terms of assembly, homotetramer.

The enzyme catalyses fluoroacetaldehyde + NAD(+) + H2O = fluoroacetate + NADH + 2 H(+). Catalyzes the oxidation of fluoroacetaldehyde to fluoroacetate. Has high affinity for fluoroacetate and glycolaldehyde but not for acetaldehyde. The chain is Fluoroacetaldehyde dehydrogenase from Streptantibioticus cattleyicolor (strain ATCC 35852 / DSM 46488 / JCM 4925 / NBRC 14057 / NRRL 8057) (Streptomyces cattleya).